Reading from the N-terminus, the 87-residue chain is Large ribosomal subunit protein eL31 (87 aa).

This sequence belongs to the eukaryotic ribosomal protein eL31 family.

In Methanocaldococcus jannaschii (strain ATCC 43067 / DSM 2661 / JAL-1 / JCM 10045 / NBRC 100440) (Methanococcus jannaschii), this protein is Large ribosomal subunit protein eL31 (rpl31e).